The following is a 152-amino-acid chain: UPF0179 protein HQ_3004A (152 aa).

Belongs to the UPF0179 family.

In Haloquadratum walsbyi (strain DSM 16790 / HBSQ001), this protein is UPF0179 protein HQ_3004A.